Reading from the N-terminus, the 319-residue chain is Acetyl-coenzyme A carboxylase carboxyl transferase subunit alpha (319 aa).

Positions 35–296 (NLDEEVQRLR…KAQLLADLAD (262 aa)) constitute a CoA carboxyltransferase C-terminal domain.

It belongs to the AccA family. As to quaternary structure, acetyl-CoA carboxylase is a heterohexamer composed of biotin carboxyl carrier protein (AccB), biotin carboxylase (AccC) and two subunits each of ACCase subunit alpha (AccA) and ACCase subunit beta (AccD).

It localises to the cytoplasm. It catalyses the reaction N(6)-carboxybiotinyl-L-lysyl-[protein] + acetyl-CoA = N(6)-biotinyl-L-lysyl-[protein] + malonyl-CoA. It functions in the pathway lipid metabolism; malonyl-CoA biosynthesis; malonyl-CoA from acetyl-CoA: step 1/1. Its function is as follows. Component of the acetyl coenzyme A carboxylase (ACC) complex. First, biotin carboxylase catalyzes the carboxylation of biotin on its carrier protein (BCCP) and then the CO(2) group is transferred by the carboxyltransferase to acetyl-CoA to form malonyl-CoA. The sequence is that of Acetyl-coenzyme A carboxylase carboxyl transferase subunit alpha from Erwinia tasmaniensis (strain DSM 17950 / CFBP 7177 / CIP 109463 / NCPPB 4357 / Et1/99).